The sequence spans 276 residues: Octanoyltransferase LipM (276 aa).

One can recognise a BPL/LPL catalytic domain in the interval Gly32 to Leu247. Catalysis depends on Cys149, which acts as the Acyl-thioester intermediate.

This sequence belongs to the octanoyltransferase LipM family. In terms of assembly, monomer.

It catalyses the reaction octanoyl-[ACP] + L-lysyl-[protein] = N(6)-octanoyl-L-lysyl-[protein] + holo-[ACP] + H(+). The protein operates within protein modification; protein lipoylation via endogenous pathway; protein N(6)-(lipoyl)lysine from octanoyl-[acyl-carrier-protein]. Its function is as follows. Catalyzes the transfer of endogenously produced octanoic acid from octanoyl-acyl-carrier-protein onto the lipoyl domain of GcvH, an intermediate carrier during protein lipoylation. The polypeptide is Octanoyltransferase LipM (Macrococcus caseolyticus (strain JCSC5402) (Macrococcoides caseolyticum)).